A 283-amino-acid polypeptide reads, in one-letter code: MAAPVGRTLLGLARGWRQLDRFWAGSSRGLSLEAASSSSRSPWRLSGALCLQRPPLITKALTPLQEEMAGLLQQIEVERSLYSDHELRALDEAQRLAKKKADLYDEEQEQGITLAQDLEDMWEQAFLQFRPGARETEADKKNDRTSLHRKLDRNLVLLVREKLGDQDVWMLPQVEWQPGETLRGTAERILATLSENNMEAKFLGNAPCGHYKFKFPKAIQTESDLGVKVFFFKALLLTGDFVQAGKKSRHVWASKEELGDYLQPKYLAQVRRFLLDSDGLSCL.

Lysine 217 is subject to N6-succinyllysine. An N6-acetyllysine modification is found at lysine 228. Lysine 246 bears the N6-succinyllysine mark.

It belongs to the mitochondrion-specific ribosomal protein mL46 family. In terms of assembly, component of the mitochondrial ribosome large subunit (39S) which comprises a 16S rRNA and about 50 distinct proteins.

It localises to the mitochondrion. The polypeptide is Large ribosomal subunit protein mL46 (Mrpl46) (Mus musculus (Mouse)).